The primary structure comprises 757 residues: MDVNPTLLFLKVPAQNAISTTFPYTGDPPYSHGTGTGYTMDTVNRTHQYSERGRWTKNTETGAPQLNPIDGPLPEDNEPSGYAQTDCVLEAMAFLEESHPGIFENSCIETMEVVQQTRVDKLTQGRQTYDWTLNRNQPAATALANTIEVFRSNGLMANESGRLIDFLKDVMESMDKEEIEITTHFQRKRRVRDNVTKKMVTQRTIGKKKQRLNKRSYLIRALTLNTMTKDAERGKLKRRAIATPGMQIRGFVYFVETLARSICEKLEQSGLPVGGNEKKAKLANVVRKMMTNSQDTEISFTITGDNTKWNENQNPRMFLAVITYITRNQPEWFRNILSIAPIMFSNKMARLGKGYMFESKSMKLRTQISAEMLANIDLKYFNDSTRKKIEKIRPLLIDGTASLSPGMMMGMFNMLSTVLGVSILNLGQKRYTKTTYWWDGLQSSDDFALIVNAPNHAGIQAGVDRFYRTCKLLGINMSKKKSYINRTGTFEFTSFFYRYGFVANFSMELPSFGVSGINESADMSIGVTVIKNNMINNDLGPATAQMALQLFIKDYRYTYRCHRGDTQIQTRRSFEIKKLWEQTRSKAGLLVSDGGPNLYNIRNLHTPEVCLKWELMDEDYQGRLCNPLNPFVSHKEIESVNNAVMMPAHGPAKNMEYDAVATTHSWVPKRNRSILNTSQRGILEDEQMYQRCCNLFERFFPSSSYRRPVGISSMVEAMVSRARIDARIDFESGRIKKEDFTEIMKICSTIEELRRQK.

The segment at 50 to 82 (SERGRWTKNTETGAPQLNPIDGPLPEDNEPSGY) is disordered. 2 consecutive short sequence motifs (nuclear localization signal) follow at residues 187 to 195 (RKRRVRDNV) and 203 to 216 (RTIGKKKQRLNKRS). The promoter-binding site stretch occupies residues 249 to 256 (RGFVYFVE). Residues 286 to 483 (VRKMMTNSQD…GINMSKKKSY (198 aa)) form the RdRp catalytic domain.

It belongs to the influenza viruses polymerase PB1 family. Influenza RNA polymerase is composed of three subunits: PB1, PB2 and PA. Interacts (via N-terminus) with PA (via C-terminus). Interacts (via C-terminus) with PB2 (via N-terminus); this interaction is essential for transcription initiation. Interacts (via C-terminus) with human PKP2 (via N-terminus); the interaction competitively inhibits the interaction between the RNA polymerase subunits PB1 and PB2. Phosphorylated by host PRKCA.

It is found in the host nucleus. Its subcellular location is the host cytoplasm. It catalyses the reaction RNA(n) + a ribonucleoside 5'-triphosphate = RNA(n+1) + diphosphate. RNA-dependent RNA polymerase which is responsible for replication and transcription of virus RNA segments. The transcription of viral mRNAs occurs by a unique mechanism called cap-snatching. 5' methylated caps of cellular mRNAs are cleaved after 10-13 nucleotides by PA. In turn, these short capped RNAs are used as primers by PB1 for transcription of viral mRNAs. During virus replication, PB1 initiates RNA synthesis and copy vRNA into complementary RNA (cRNA) which in turn serves as a template for the production of more vRNAs. In Influenza A virus (strain A/Beijing/11/1956 H1N1), this protein is RNA-directed RNA polymerase catalytic subunit.